Reading from the N-terminus, the 186-residue chain is Large ribosomal subunit protein bL9 (186 aa).

The span at 151 to 167 shows a compositional bias: basic and acidic residues; sequence PEEAEKQARGEAIMREE. A disordered region spans residues 151–186; that stretch reads PEEAEKQARGEAIMREESEYELETGEEVAEGPEQTA. The segment covering 168–180 has biased composition (acidic residues); the sequence is SEYELETGEEVAE.

The protein belongs to the bacterial ribosomal protein bL9 family.

Functionally, binds to the 23S rRNA. The chain is Large ribosomal subunit protein bL9 from Acidiphilium cryptum (strain JF-5).